Here is a 365-residue protein sequence, read N- to C-terminus: Peptide chain release factor 2 (365 aa).

Gln252 bears the N5-methylglutamine mark.

This sequence belongs to the prokaryotic/mitochondrial release factor family. In terms of processing, methylated by PrmC. Methylation increases the termination efficiency of RF2.

It is found in the cytoplasm. Its function is as follows. Peptide chain release factor 2 directs the termination of translation in response to the peptide chain termination codons UGA and UAA. The polypeptide is Peptide chain release factor 2 (Colwellia psychrerythraea (strain 34H / ATCC BAA-681) (Vibrio psychroerythus)).